Here is a 160-residue protein sequence, read N- to C-terminus: Transcription elongation factor GreA (160 aa).

Positions Glu12–Ser76 form a coiled coil.

Belongs to the GreA/GreB family.

Necessary for efficient RNA polymerase transcription elongation past template-encoded arresting sites. The arresting sites in DNA have the property of trapping a certain fraction of elongating RNA polymerases that pass through, resulting in locked ternary complexes. Cleavage of the nascent transcript by cleavage factors such as GreA or GreB allows the resumption of elongation from the new 3'terminus. GreA releases sequences of 2 to 3 nucleotides. This is Transcription elongation factor GreA from Clostridium botulinum (strain Kyoto / Type A2).